The primary structure comprises 338 residues: ATP synthase subunit a (338 aa).

Residues 15-35 traverse the membrane as a helical segment; sequence IAVLVMPLLLGFGAPIYAAAE. The segment at 45–66 is disordered; that stretch reads AAAVHTDEAHGEAGEHAEGGHG. The segment covering 49 to 65 has biased composition (basic and acidic residues); sequence HTDEAHGEAGEHAEGGH. The next 7 membrane-spanning stretches (helical) occupy residues 109-129, 174-194, 199-219, 238-258, 262-282, 287-307, and 308-328; these read HVVF…YVGN, LLTV…PYGA, NINV…VSAI, ALWI…PFAL, LFAN…ISFI, IVAI…EIFV, and SFLQ…LGSA.

The protein belongs to the ATPase A chain family. As to quaternary structure, F-type ATPases have 2 components, CF(1) - the catalytic core - and CF(0) - the membrane proton channel. CF(1) has five subunits: alpha(3), beta(3), gamma(1), delta(1), epsilon(1). CF(0) has four main subunits: a, b, b' and c.

It is found in the cell inner membrane. Functionally, key component of the proton channel; it plays a direct role in the translocation of protons across the membrane. This is ATP synthase subunit a from Chlorobium phaeobacteroides (strain BS1).